Reading from the N-terminus, the 146-residue chain is Putative pre-16S rRNA nuclease (146 aa).

Belongs to the YqgF nuclease family.

It is found in the cytoplasm. In terms of biological role, could be a nuclease involved in processing of the 5'-end of pre-16S rRNA. The sequence is that of Putative pre-16S rRNA nuclease from Pediococcus pentosaceus (strain ATCC 25745 / CCUG 21536 / LMG 10740 / 183-1w).